Consider the following 314-residue polypeptide: Malate dehydrogenase (314 aa).

NAD(+) is bound by residues 12–17 (GSGFTG) and aspartate 36. The substrate site is built by arginine 87 and arginine 93. Residues asparagine 100 and 123–125 (LTN) each bind NAD(+). Position 125 (asparagine 125) interacts with substrate. Serine 149 carries the phosphoserine modification. Arginine 156 provides a ligand contact to substrate. Catalysis depends on histidine 180, which acts as the Proton acceptor.

Belongs to the LDH/MDH superfamily. MDH type 3 family.

It catalyses the reaction (S)-malate + NAD(+) = oxaloacetate + NADH + H(+). Its function is as follows. Catalyzes the reversible oxidation of malate to oxaloacetate. This is Malate dehydrogenase from Shouchella clausii (strain KSM-K16) (Alkalihalobacillus clausii).